The primary structure comprises 85 residues: U4-theraphotoxin-Hhn1a (85 aa).

Residues 1–22 (MKVTLIAILTCAAALVLHTTAA) form the signal peptide. The propeptide occupies 23–48 (EELEAESQLMEVGMPDTELAAVDEER). Cystine bridges form between C52/C66, C56/C77, and C71/C82.

The protein belongs to the neurotoxin 12 (Hwtx-2) family. 02 (Hwtx-2) subfamily. Monomer. In terms of tissue distribution, expressed by the venom gland.

It is found in the secreted. Functionally, neurotoxin active on both insects and mammals. The chain is U4-theraphotoxin-Hhn1a from Cyriopagopus hainanus (Chinese bird spider).